The following is a 484-amino-acid chain: RNA polymerase sigma-54 factor 1 (484 aa).

Positions 355-374 (NLKAVAEAIQMHESTVSRVT) form a DNA-binding region, H-T-H motif. The RPON box signature appears at 444 to 452 (ARRTVAKYR). Residues 464-484 (RRDNMWSTMNSRASGGTGLDK) form a disordered region. Residues 468 to 477 (MWSTMNSRAS) show a composition bias toward polar residues.

The protein belongs to the sigma-54 factor family.

Functionally, sigma factors are initiation factors that promote the attachment of RNA polymerase to specific initiation sites and are then released. This sigma factor is responsible for the expression of the nitrogen fixation genes. The protein is RNA polymerase sigma-54 factor 1 (rpoN1) of Bradyrhizobium diazoefficiens (strain JCM 10833 / BCRC 13528 / IAM 13628 / NBRC 14792 / USDA 110).